The sequence spans 215 residues: MSSNIVLTVDVREGTGKGAARAARREDLVPGIVYGGKLDPVSVTLRGNEIRKALLGGHFLSNMIEIDHKGKRQTVIARDIQFHPVSDKAMHIDLYRVDEDTKINVNVAVNFTNEDACPALKRGGVLNIVRHDVELLCPAGSIPESVEADLTGLDIGDSLHISAIKLPKGVVPTITDRDFTVATLQGSRAVLTDAEEETDETPEEPEAIRQKGDEE.

The tract at residues 190 to 215 is disordered; it reads VLTDAEEETDETPEEPEAIRQKGDEE. Positions 193–205 are enriched in acidic residues; it reads DAEEETDETPEEP. Basic and acidic residues predominate over residues 206 to 215; that stretch reads EAIRQKGDEE.

The protein belongs to the bacterial ribosomal protein bL25 family. CTC subfamily. As to quaternary structure, part of the 50S ribosomal subunit; part of the 5S rRNA/L5/L18/L25 subcomplex. Contacts the 5S rRNA. Binds to the 5S rRNA independently of L5 and L18.

Its function is as follows. This is one of the proteins that binds to the 5S RNA in the ribosome where it forms part of the central protuberance. The chain is Large ribosomal subunit protein bL25 from Maricaulis maris (strain MCS10) (Caulobacter maris).